The following is a 1071-amino-acid chain: V-type proton ATPase catalytic subunit A (1071 aa).

A2 is modified (N-acetylalanine). Position 131 is a phosphothreonine (T131). 257–264 (GAFGCGKT) is an ATP binding site. The DOD-type homing endonuclease domain maps to 494–642 (LLGLWIGDGL…LVSLARSLGL (149 aa)). A phosphoserine mark is found at S858 and S928.

This sequence belongs to the ATPase alpha/beta chains family. V-ATPase is a heteromultimeric enzyme composed of a peripheral catalytic V1 complex (components A to H) attached to an integral membrane V0 proton pore complex (components: a, c, c', c'', d, e, f and VOA1). Interacts with RAV1 and RAV2 components of the RAVE complex, which are essential for the stability and assembly of V-ATPase. In terms of processing, this protein undergoes a protein self splicing that involves a post-translational excision of the VDE intervening region (intein) followed by peptide ligation.

Its subcellular location is the vacuole membrane. It carries out the reaction ATP + H2O + 4 H(+)(in) = ADP + phosphate + 5 H(+)(out). Functionally, catalytic subunit of the V1 complex of vacuolar(H+)-ATPase (V-ATPase), a multisubunit enzyme composed of a peripheral complex (V1) that hydrolyzes ATP and a membrane integral complex (V0) that translocates protons. V-ATPase is responsible for acidifying and maintaining the pH of intracellular compartments. In terms of biological role, PI-SceI is an endonuclease that can cleave at a site present in a VMA1 allele that lacks the derived endonuclease segment of the open reading frame; cleavage at this site only occurs during meiosis and initiates 'homing', a genetic event that converts a VMA1 allele lacking VDE into one that contains it. The protein is V-type proton ATPase catalytic subunit A of Saccharomyces cerevisiae (strain ATCC 204508 / S288c) (Baker's yeast).